The primary structure comprises 229 residues: 2,3-bisphosphoglycerate-dependent phosphoglycerate mutase (229 aa).

Substrate is bound by residues 7-14, 20-21, arginine 59, 86-89, lysine 97, 113-114, and 182-183; these read RHGQSEWN, TG, ERHY, RR, and GN. The active-site Tele-phosphohistidine intermediate is histidine 8. Catalysis depends on glutamate 86, which acts as the Proton donor/acceptor.

It belongs to the phosphoglycerate mutase family. BPG-dependent PGAM subfamily.

It catalyses the reaction (2R)-2-phosphoglycerate = (2R)-3-phosphoglycerate. It participates in carbohydrate degradation; glycolysis; pyruvate from D-glyceraldehyde 3-phosphate: step 3/5. Catalyzes the interconversion of 2-phosphoglycerate and 3-phosphoglycerate. This Listeria welshimeri serovar 6b (strain ATCC 35897 / DSM 20650 / CCUG 15529 / CIP 8149 / NCTC 11857 / SLCC 5334 / V8) protein is 2,3-bisphosphoglycerate-dependent phosphoglycerate mutase.